The primary structure comprises 306 residues: Small ribosomal subunit protein uS2 (306 aa).

Serine 2 carries the N-acetylserine modification. 2 laminin-binding regions span residues 161–180 (IPCNNKGAHSVGLMWWMLAR) and 205–229 (RDPEEIEKEEQAAAEKATTKEEFQG). [DE]-W-[ST] repeat units lie at residues 230–232 (EWT), 245–247 (DWS), 276–278 (DWS), 286–288 (DWS), and 304–306 (EWS). The interval 242–306 (EVADWSEGVQ…EWTGTTTEWS (65 aa)) is laminin-binding. Residues 247–306 (SEGVQVPSVPIQQFTAERTDVPPAPKPTEDWSTQPASTDDWSAAPTAQASEWTGTTTEWS) form a disordered region. Residues 276 to 306 (DWSTQPASTDDWSAAPTAQASEWTGTTTEWS) are compositionally biased toward polar residues.

This sequence belongs to the universal ribosomal protein uS2 family. In terms of assembly, monomer (37LRP) and homodimer (67LR). Component of the small ribosomal subunit. Mature ribosomes consist of a small (40S) and a large (60S) subunit. The 40S subunit contains about 33 different proteins and 1 molecule of RNA (18S). The 60S subunit contains about 49 different proteins and 3 molecules of RNA (28S, 5.8S and 5S). Interacts with rps21. Interacts with several laminins including at least lamb1. Interacts with mdk. Acylated. Acylation may be a prerequisite for conversion of the monomeric 37 kDa laminin receptor precursor (37LRP) to the mature dimeric 67 kDa laminin receptor (67LR), and may provide a mechanism for membrane association. Post-translationally, cleaved by stromelysin-3 (ST3) at the cell surface. Cleavage by stromelysin-3 may be a mechanism to alter cell-extracellular matrix interactions.

The protein localises to the cell membrane. It localises to the cytoplasm. The protein resides in the nucleus. Required for the assembly and/or stability of the 40S ribosomal subunit. Required for the processing of the 20S rRNA-precursor to mature 18S rRNA in a late step of the maturation of 40S ribosomal subunits. Also functions as a cell surface receptor for laminin. Plays a role in cell adhesion to the basement membrane and in the consequent activation of signaling transduction pathways. May play a role in cell fate determination and tissue morphogenesis. This chain is Small ribosomal subunit protein uS2 (rpsa), found in Xenopus laevis (African clawed frog).